We begin with the raw amino-acid sequence, 83 residues long: UPF0512 protein W (83 aa).

It belongs to the UPF0512 family.

The chain is UPF0512 protein W from Dictyostelium discoideum (Social amoeba).